Consider the following 964-residue polypeptide: Phosphoenolpyruvate carboxylase (964 aa).

At S11 the chain carries Phosphoserine. Residues H172 and K600 contribute to the active site.

This sequence belongs to the PEPCase type 1 family. Homotetramer. The cofactor is Mg(2+).

It is found in the cytoplasm. The catalysed reaction is oxaloacetate + phosphate = phosphoenolpyruvate + hydrogencarbonate. It functions in the pathway photosynthesis; C4 acid pathway. By light-reversible phosphorylation. Its function is as follows. Through the carboxylation of phosphoenolpyruvate (PEP) it forms oxaloacetate, a four-carbon dicarboxylic acid source for the tricarboxylic acid cycle. This chain is Phosphoenolpyruvate carboxylase (PPC), found in Nicotiana tabacum (Common tobacco).